The primary structure comprises 222 residues: Uridine diphosphate glucose pyrophosphatase NUDT14 (222 aa).

Residues 38 to 206 (KTHDSVTILM…DIPKTLGVIY (169 aa)) form the Nudix hydrolase domain. The Nudix box signature appears at 111 to 129 (PGLSLEEAACKEAWEECGY).

Belongs to the Nudix hydrolase family. Homodimer. Mg(2+) serves as cofactor.

The protein localises to the cytoplasm. It catalyses the reaction UDP-sugar + H2O = UMP + alpha-D-aldose 1-phosphate.. Functionally, hydrolyzes UDP-glucose to glucose 1-phosphate and UMP and ADP-ribose to ribose 5-phosphate and AMP. The physiological substrate is probably UDP-glucose. Poor activity on other substrates such as ADP-glucose, CDP-glucose, GDP-glucose and GDP-mannose. The sequence is that of Uridine diphosphate glucose pyrophosphatase NUDT14 (Nudt14) from Mus musculus (Mouse).